A 450-amino-acid polypeptide reads, in one-letter code: Phosphoglucosamine mutase (450 aa).

S100 functions as the Phosphoserine intermediate in the catalytic mechanism. Mg(2+) contacts are provided by S100, D240, D242, and D244. Position 100 is a phosphoserine (S100).

Belongs to the phosphohexose mutase family. Mg(2+) serves as cofactor. Activated by phosphorylation.

The enzyme catalyses alpha-D-glucosamine 1-phosphate = D-glucosamine 6-phosphate. Catalyzes the conversion of glucosamine-6-phosphate to glucosamine-1-phosphate. This is Phosphoglucosamine mutase from Desulforudis audaxviator (strain MP104C).